Consider the following 517-residue polypeptide: Crotonobetaine/carnitine--CoA ligase (517 aa).

Belongs to the ATP-dependent AMP-binding enzyme family.

It carries out the reaction 4-(trimethylamino)butanoate + ATP + CoA = 4-(trimethylamino)butanoyl-CoA + AMP + diphosphate. The catalysed reaction is crotonobetaine + ATP + CoA = crotonobetainyl-CoA + AMP + diphosphate. It catalyses the reaction (R)-carnitine + ATP + CoA = (R)-carnitinyl-CoA + AMP + diphosphate. It participates in amine and polyamine metabolism; carnitine metabolism. Its function is as follows. Catalyzes the transfer of CoA to carnitine, generating the initial carnitinyl-CoA needed for the CaiB reaction cycle. Also has activity toward crotonobetaine and gamma-butyrobetaine. The protein is Crotonobetaine/carnitine--CoA ligase of Salmonella paratyphi B (strain ATCC BAA-1250 / SPB7).